The following is a 626-amino-acid chain: (+)-3-carene synthase 2, chloroplastic (626 aa).

The N-terminal 45 residues, methionine 1–alanine 45, are a transit peptide targeting the chloroplast. Mg(2+)-binding residues include aspartate 377, aspartate 381, and aspartate 529. The DDXXD motif motif lies at aspartate 377 to aspartate 381.

The protein belongs to the terpene synthase family. Tpsd subfamily. Mg(2+) is required as a cofactor. The cofactor is Mn(2+).

It is found in the plastid. It localises to the chloroplast. The enzyme catalyses (2E)-geranyl diphosphate = (+)-car-3-ene + diphosphate. It functions in the pathway terpene metabolism; oleoresin biosynthesis. The protein operates within secondary metabolite biosynthesis; terpenoid biosynthesis. Functionally, monoterpene synthase (TPS) involved in the biosynthesis of monoterpene natural products included in conifer oleoresin secretions and volatile emissions; these compounds contribute to biotic and abiotic stress defense against herbivores and pathogens. Catalyzes the conversion of (2E)-geranyl diphosphate (GPP) to (+)-3-carene. This chain is (+)-3-carene synthase 2, chloroplastic, found in Pinus banksiana (Jack pine).